The following is a 336-amino-acid chain: Cellodextrinase A (336 aa).

Glu-141 serves as the catalytic Proton donor.

This sequence belongs to the glycosyl hydrolase 5 (cellulase A) family.

The protein resides in the secreted. Crystalline cellulose degradation. The protein is Cellodextrinase A (celA) of Ruminococcus flavefaciens.